We begin with the raw amino-acid sequence, 354 residues long: Src kinase-associated phosphoprotein 1 (354 aa).

In terms of domain architecture, PH spans 107–210 (NVIKQGYLEK…WVDQISFLLK (104 aa)). Residues Tyr142 and Tyr236 each carry the phosphotyrosine modification. Phosphotyrosine; by FYN occurs at positions 267 and 290. The interval 285–290 (RRRVDY) is interaction with FYB1. The 62-residue stretch at 289-350 (DYADYYQGLW…PKDYLTTAFE (62 aa)) folds into the SH3 domain.

The protein belongs to the SKAP family. As to quaternary structure, homodimer. Interacts with FYN. Interacts with PTPRC. Interacts with GRB2 when phosphorylated on Tyr-267. Interacts with FYB1, which is required for SKAP2 protein stability. Part of a complex consisting of SKAP1, FYB1 and CLNK. Interacts with RASGRP1. Interacts with FYB2. In terms of processing, phosphorylated on tyrosines. Phosphorylation by FYN on Tyr-267 is required for GRB2 interaction. Phosphorylation by FYN on Tyr-290 abolishes interaction with FYB1. Tyr-236 is dephosphorylated by PTPRC. In terms of tissue distribution, expressed in mast cells (at protein level).

The protein resides in the cytoplasm. It is found in the nucleus. Its subcellular location is the cell membrane. Functionally, positively regulates T-cell receptor signaling by enhancing the MAP kinase pathway. Required for optimal conjugation between T-cells and antigen-presenting cells by promoting the clustering of integrin ITGAL on the surface of T-cells. May be involved in high affinity immunoglobulin epsilon receptor signaling in mast cells. This Rattus norvegicus (Rat) protein is Src kinase-associated phosphoprotein 1 (Skap1).